We begin with the raw amino-acid sequence, 653 residues long: Transcription factor Ken 1 (653 aa).

The 69-residue stretch at 35–103 folds into the BTB domain; sequence TDLLLICDGK…LYSGQVYVRS (69 aa). Disordered stretches follow at residues 126 to 215, 234 to 305, 429 to 451, and 512 to 534; these read NSDG…DRDR, NNHP…SDDA, LSNN…PPSA, and ELSA…GSGS. The segment covering 145 to 157 has biased composition (polar residues); sequence NRNTEGITGSSVV. Basic residues predominate over residues 251–272; sequence GHHHHHHHHHHHRQLHQIKTRS. Polar residues predominate over residues 286-299; it reads SDPVNLSIVKQQQD. The segment covering 430–444 has biased composition (low complexity); sequence SNNNNSSSNNNNNNN. The segment covering 520–534 has biased composition (gly residues); that stretch reads AGGGGGGSGGNGSGS. C2H2-type zinc fingers lie at residues 555–577, 583–606, and 619–641; these read YRCE…LRVH, FACR…CSVH, and YTCC…LSGH.

It is found in the nucleus. Functionally, transcription factor required for terminalia development. Negative regulator of the JAK/STAT pathway: represses JAK/STAT-dependent expression of ventral veins lacking (vvl) in the posterior spiracles. The sequence is that of Transcription factor Ken 1 from Culex quinquefasciatus (Southern house mosquito).